Consider the following 446-residue polypeptide: 3-phosphoshikimate 1-carboxyvinyltransferase (446 aa).

Residues Lys30, Ser31, and Arg35 each contribute to the 3-phosphoshikimate site. Phosphoenolpyruvate is bound at residue Lys30. 2 residues coordinate phosphoenolpyruvate: Gly112 and Arg140. 3-phosphoshikimate contacts are provided by Ser186, Ser187, Gln188, Ser215, Glu334, and His361. Gln188 lines the phosphoenolpyruvate pocket. Catalysis depends on Glu334, which acts as the Proton acceptor. Phosphoenolpyruvate contacts are provided by Arg365, Arg406, and Lys431.

It belongs to the EPSP synthase family. Monomer.

The protein localises to the cytoplasm. It catalyses the reaction 3-phosphoshikimate + phosphoenolpyruvate = 5-O-(1-carboxyvinyl)-3-phosphoshikimate + phosphate. It functions in the pathway metabolic intermediate biosynthesis; chorismate biosynthesis; chorismate from D-erythrose 4-phosphate and phosphoenolpyruvate: step 6/7. In terms of biological role, catalyzes the transfer of the enolpyruvyl moiety of phosphoenolpyruvate (PEP) to the 5-hydroxyl of shikimate-3-phosphate (S3P) to produce enolpyruvyl shikimate-3-phosphate and inorganic phosphate. This Streptomyces avermitilis (strain ATCC 31267 / DSM 46492 / JCM 5070 / NBRC 14893 / NCIMB 12804 / NRRL 8165 / MA-4680) protein is 3-phosphoshikimate 1-carboxyvinyltransferase.